Consider the following 262-residue polypeptide: Taurine import ATP-binding protein TauB (262 aa).

An ABC transporter domain is found at 4-233 (LELERISAQY…RYAAGESARA (230 aa)). 38–45 (GPSGSGKT) is an ATP binding site.

It belongs to the ABC transporter superfamily. Taurine importer (TC 3.A.1.17.1) family. As to quaternary structure, the complex is composed of two ATP-binding proteins (TauB), two transmembrane proteins (TauC) and a solute-binding protein (TauA).

Its subcellular location is the cell inner membrane. It carries out the reaction taurine(out) + ATP + H2O = taurine(in) + ADP + phosphate + H(+). Its function is as follows. Part of the ABC transporter complex TauABC involved in taurine import. Responsible for energy coupling to the transport system. In Pseudomonas putida (strain ATCC 47054 / DSM 6125 / CFBP 8728 / NCIMB 11950 / KT2440), this protein is Taurine import ATP-binding protein TauB.